Here is a 119-residue protein sequence, read N- to C-terminus: Basic phospholipase A2 DE-1 (119 aa).

Cystine bridges form between C11–C71, C26–C118, C28–C44, C43–C99, C50–C92, C60–C85, and C78–C90. Ca(2+)-binding residues include Y27, G29, G31, and D48. Residue D93 is part of the active site.

Belongs to the phospholipase A2 family. Group I subfamily. D49 sub-subfamily. Ca(2+) serves as cofactor. Expressed by the venom gland.

It is found in the secreted. It carries out the reaction a 1,2-diacyl-sn-glycero-3-phosphocholine + H2O = a 1-acyl-sn-glycero-3-phosphocholine + a fatty acid + H(+). In terms of biological role, PLA2 catalyzes the calcium-dependent hydrolysis of the 2-acyl groups in 3-sn-phosphoglycerides. The polypeptide is Basic phospholipase A2 DE-1 (Hemachatus haemachatus (Rinkhals)).